The sequence spans 237 residues: 7-cyano-7-deazaguanine synthase (237 aa).

15 to 25 (LSGGMDSTVCA) provides a ligand contact to ATP. Residues C197, C205, C208, and C211 each contribute to the Zn(2+) site.

This sequence belongs to the QueC family. The cofactor is Zn(2+).

The enzyme catalyses 7-carboxy-7-deazaguanine + NH4(+) + ATP = 7-cyano-7-deazaguanine + ADP + phosphate + H2O + H(+). It functions in the pathway purine metabolism; 7-cyano-7-deazaguanine biosynthesis. Catalyzes the ATP-dependent conversion of 7-carboxy-7-deazaguanine (CDG) to 7-cyano-7-deazaguanine (preQ(0)). The polypeptide is 7-cyano-7-deazaguanine synthase (Koribacter versatilis (strain Ellin345)).